Consider the following 229-residue polypeptide: MEVNKVRIHDLPEEDRPRERLIRSGPESLSNAELLGIVLRTGSKEENVISLCSRILAEYNIKQLSLANVSRLTQVHGVGKAKAAQIAAVFELARRLETFVEEPKRKICSPKDVYALMYPRMREQKKEKFITLYLDTKNQILKEEVVSIGSLNASIVHPREVFKSALLESSASVIMVHNHPSGDPSPSREDIMVTEKLVEGGKLLGIDILDHIIIGDGRYVSLKDEGFVR.

The MPN domain occupies 106–228 (KICSPKDVYA…YVSLKDEGFV (123 aa)). Residues histidine 177, histidine 179, and aspartate 190 each coordinate Zn(2+). The JAMM motif motif lies at 177–190 (HNHPSGDPSPSRED).

Belongs to the UPF0758 family.

This is UPF0758 protein MA_1979 from Methanosarcina acetivorans (strain ATCC 35395 / DSM 2834 / JCM 12185 / C2A).